Reading from the N-terminus, the 390-residue chain is tRNA(Met) cytidine acetate ligase (390 aa).

ATP-binding positions include 7–20, G101, N152, and R177; that span reads ITEY…HIYH.

The protein belongs to the TmcAL family.

The protein localises to the cytoplasm. The enzyme catalyses cytidine(34) in elongator tRNA(Met) + acetate + ATP = N(4)-acetylcytidine(34) in elongator tRNA(Met) + AMP + diphosphate. In terms of biological role, catalyzes the formation of N(4)-acetylcytidine (ac(4)C) at the wobble position of elongator tRNA(Met), using acetate and ATP as substrates. First activates an acetate ion to form acetyladenylate (Ac-AMP) and then transfers the acetyl group to tRNA to form ac(4)C34. This Leuconostoc mesenteroides subsp. mesenteroides (strain ATCC 8293 / DSM 20343 / BCRC 11652 / CCM 1803 / JCM 6124 / NCDO 523 / NBRC 100496 / NCIMB 8023 / NCTC 12954 / NRRL B-1118 / 37Y) protein is tRNA(Met) cytidine acetate ligase.